An 89-amino-acid polypeptide reads, in one-letter code: UPF0335 protein OCAR_5086/OCA5_c28780 (89 aa).

This sequence belongs to the UPF0335 family.

The sequence is that of UPF0335 protein OCAR_5086/OCA5_c28780 from Afipia carboxidovorans (strain ATCC 49405 / DSM 1227 / KCTC 32145 / OM5) (Oligotropha carboxidovorans).